The following is a 319-amino-acid chain: Na(+)-translocating NADH-quinone reductase subunit C (319 aa).

Residues 14–34 form a helical membrane-spanning segment; that stretch reads WYVILFIFALSLFSSVFLSTV. Position 283 is an FMN phosphoryl threonine (Thr-283).

Belongs to the NqrC family. In terms of assembly, composed of six subunits; NqrA, NqrB, NqrC, NqrD, NqrE and NqrF. The cofactor is FMN.

The protein resides in the cell inner membrane. It catalyses the reaction a ubiquinone + n Na(+)(in) + NADH + H(+) = a ubiquinol + n Na(+)(out) + NAD(+). Functionally, NQR complex catalyzes the reduction of ubiquinone-1 to ubiquinol by two successive reactions, coupled with the transport of Na(+) ions from the cytoplasm to the periplasm. NqrA to NqrE are probably involved in the second step, the conversion of ubisemiquinone to ubiquinol. This Chlamydia caviae (strain ATCC VR-813 / DSM 19441 / 03DC25 / GPIC) (Chlamydophila caviae) protein is Na(+)-translocating NADH-quinone reductase subunit C.